Consider the following 205-residue polypeptide: Holliday junction branch migration complex subunit RuvA (205 aa).

Residues 1–64 (MIGRLRGVLI…EDAQLLYGFI (64 aa)) are domain I. The interval 65–143 (TKKERSLFRL…SLMEASVGSE (79 aa)) is domain II. A flexible linker region spans residues 144 to 156 (REFVLQSNYSPAP). A domain III region spans residues 157 to 205 (TVNSAEEDAISALLSLGYKPPQASKAVSAAYKEGMDSETLIKAALKSML).

It belongs to the RuvA family. In terms of assembly, homotetramer. Forms an RuvA(8)-RuvB(12)-Holliday junction (HJ) complex. HJ DNA is sandwiched between 2 RuvA tetramers; dsDNA enters through RuvA and exits via RuvB. An RuvB hexamer assembles on each DNA strand where it exits the tetramer. Each RuvB hexamer is contacted by two RuvA subunits (via domain III) on 2 adjacent RuvB subunits; this complex drives branch migration. In the full resolvosome a probable DNA-RuvA(4)-RuvB(12)-RuvC(2) complex forms which resolves the HJ.

It localises to the cytoplasm. Functionally, the RuvA-RuvB-RuvC complex processes Holliday junction (HJ) DNA during genetic recombination and DNA repair, while the RuvA-RuvB complex plays an important role in the rescue of blocked DNA replication forks via replication fork reversal (RFR). RuvA specifically binds to HJ cruciform DNA, conferring on it an open structure. The RuvB hexamer acts as an ATP-dependent pump, pulling dsDNA into and through the RuvAB complex. HJ branch migration allows RuvC to scan DNA until it finds its consensus sequence, where it cleaves and resolves the cruciform DNA. This chain is Holliday junction branch migration complex subunit RuvA, found in Shewanella sp. (strain MR-4).